Consider the following 330-residue polypeptide: ADP-L-glycero-D-manno-heptose-6-epimerase (330 aa).

Residues 11–12 (FI), 32–33 (DN), Lys39, Lys54, 75–79 (EGACS), and Asn92 contribute to the NADP(+) site. Catalysis depends on Tyr139, which acts as the Proton acceptor. Lys143 is an NADP(+) binding site. Position 168 (Asn168) interacts with substrate. Positions 169 and 177 each coordinate NADP(+). Residue Lys177 is the Proton acceptor of the active site. Substrate-binding positions include Arg179, His186, 200–203 (FGEY), Arg213, and Tyr292.

It belongs to the NAD(P)-dependent epimerase/dehydratase family. HldD subfamily. As to quaternary structure, homopentamer. NADP(+) is required as a cofactor.

The catalysed reaction is ADP-D-glycero-beta-D-manno-heptose = ADP-L-glycero-beta-D-manno-heptose. Its pathway is nucleotide-sugar biosynthesis; ADP-L-glycero-beta-D-manno-heptose biosynthesis; ADP-L-glycero-beta-D-manno-heptose from D-glycero-beta-D-manno-heptose 7-phosphate: step 4/4. Functionally, catalyzes the interconversion between ADP-D-glycero-beta-D-manno-heptose and ADP-L-glycero-beta-D-manno-heptose via an epimerization at carbon 6 of the heptose. The protein is ADP-L-glycero-D-manno-heptose-6-epimerase of Burkholderia pseudomallei (strain 1026b).